The sequence spans 366 residues: Small ribosomal subunit biogenesis GTPase RsgA (366 aa).

Residues 107–266 (RSEGQILAAN…LIDTPGLRGV (160 aa)) form the CP-type G domain. GTP-binding positions include 154–157 (TKAD) and 208–216 (GQSGAGKST). Positions 289, 294, 296, and 302 each coordinate Zn(2+).

It belongs to the TRAFAC class YlqF/YawG GTPase family. RsgA subfamily. As to quaternary structure, monomer. Associates with 30S ribosomal subunit, binds 16S rRNA. Requires Zn(2+) as cofactor.

It is found in the cytoplasm. Functionally, one of several proteins that assist in the late maturation steps of the functional core of the 30S ribosomal subunit. Helps release RbfA from mature subunits. May play a role in the assembly of ribosomal proteins into the subunit. Circularly permuted GTPase that catalyzes slow GTP hydrolysis, GTPase activity is stimulated by the 30S ribosomal subunit. The polypeptide is Small ribosomal subunit biogenesis GTPase RsgA (Streptomyces coelicolor (strain ATCC BAA-471 / A3(2) / M145)).